The chain runs to 225 residues: Membrane protein LapB (225 aa).

The protein to H.influenzae HI_1119.

It localises to the cell membrane. The sequence is that of Membrane protein LapB (lapB) from Mannheimia haemolytica (Pasteurella haemolytica).